The chain runs to 234 residues: Enterobactin synthase component D (234 aa).

D107, E109, and E152 together coordinate Mg(2+).

Belongs to the P-Pant transferase superfamily. EntD family. In terms of assembly, entB, EntD, EntE, and EntF form a multienzyme complex called enterobactin synthase. It depends on Mg(2+) as a cofactor.

The protein localises to the membrane. The enzyme catalyses apo-[aryl-carrier protein] + CoA = holo-[aryl-carrier protein] + adenosine 3',5'-bisphosphate + H(+). It carries out the reaction apo-[peptidyl-carrier protein] + CoA = holo-[peptidyl-carrier protein] + adenosine 3',5'-bisphosphate + H(+). Its pathway is siderophore biosynthesis; enterobactin biosynthesis. In terms of biological role, involved in the biosynthesis of the siderophore enterobactin (enterochelin), which is a macrocyclic trimeric lactone of N-(2,3-dihydroxybenzoyl)-serine. The serine trilactone serves as a scaffolding for the three catechol functionalities that provide hexadentate coordination for the tightly ligated iron(2+) atoms. Plays an essential role in the assembly of the enterobactin by catalyzing the transfer of the 4'-phosphopantetheine (Ppant) moiety from coenzyme A to the apo-domains of both EntB (ArCP domain) and EntF (PCP domain) to yield their holo-forms which make them competent for the activation of 2,3-dihydroxybenzoate (DHB) and L-serine, respectively. This Salmonella typhi protein is Enterobactin synthase component D.